The chain runs to 269 residues: Formamidopyrimidine-DNA glycosylase (269 aa).

Proline 2 functions as the Schiff-base intermediate with DNA in the catalytic mechanism. Catalysis depends on glutamate 3, which acts as the Proton donor. The active-site Proton donor; for beta-elimination activity is lysine 57. Histidine 90, arginine 109, and arginine 150 together coordinate DNA. An FPG-type zinc finger spans residues 235–269 (NVYGRAGQPCVQCDAILKADRHGQRSTAYCPQCQR). Catalysis depends on arginine 259, which acts as the Proton donor; for delta-elimination activity.

The protein belongs to the FPG family. As to quaternary structure, monomer. Zn(2+) is required as a cofactor.

The catalysed reaction is Hydrolysis of DNA containing ring-opened 7-methylguanine residues, releasing 2,6-diamino-4-hydroxy-5-(N-methyl)formamidopyrimidine.. It catalyses the reaction 2'-deoxyribonucleotide-(2'-deoxyribose 5'-phosphate)-2'-deoxyribonucleotide-DNA = a 3'-end 2'-deoxyribonucleotide-(2,3-dehydro-2,3-deoxyribose 5'-phosphate)-DNA + a 5'-end 5'-phospho-2'-deoxyribonucleoside-DNA + H(+). Functionally, involved in base excision repair of DNA damaged by oxidation or by mutagenic agents. Acts as a DNA glycosylase that recognizes and removes damaged bases. Has a preference for oxidized purines, such as 7,8-dihydro-8-oxoguanine (8-oxoG). Has AP (apurinic/apyrimidinic) lyase activity and introduces nicks in the DNA strand. Cleaves the DNA backbone by beta-delta elimination to generate a single-strand break at the site of the removed base with both 3'- and 5'-phosphates. This Alcanivorax borkumensis (strain ATCC 700651 / DSM 11573 / NCIMB 13689 / SK2) protein is Formamidopyrimidine-DNA glycosylase.